The chain runs to 200 residues: MADPRIEELPDEETKKPTVEELDESSDEESDAEAGDASLPAGSTAVIHSRNEKKARKAIEKLHLTRVPGITRVTLRRPKNILFVINNPEVYKSPNSNTYIVFGEAKIEDLNASAQAAAAQQLANQTAEHDHAGHTHDHKHEAAKEEEEEEDDGEEVDAEGIEDKDIELVMTQANVSRKKAIKALKENDNDIVNSIMALSV.

Basic and acidic residues predominate over residues 1–19; the sequence is MADPRIEELPDEETKKPTV. 2 disordered regions span residues 1 to 52 and 120 to 165; these read MADP…SRNE and QQLA…EDKD. Residues 20 to 34 show a composition bias toward acidic residues; sequence EELDESSDEESDAEA. The NAC-A/B domain maps to 49 to 114; that stretch reads SRNEKKARKA…AKIEDLNASA (66 aa). A compositionally biased stretch (basic and acidic residues) spans 127–143; that stretch reads AEHDHAGHTHDHKHEAA. Residues 144–160 show a composition bias toward acidic residues; the sequence is KEEEEEEDDGEEVDAEG. The UBA domain occupies 161-200; that stretch reads IEDKDIELVMTQANVSRKKAIKALKENDNDIVNSIMALSV.

The protein belongs to the NAC-alpha family. In terms of assembly, part of the nascent polypeptide-associated complex (NAC), consisting of EGD2 and EGD1. NAC associates with ribosomes via EGD1.

Its subcellular location is the cytoplasm. The protein localises to the nucleus. Functionally, component of the nascent polypeptide-associated complex (NAC), a dynamic component of the ribosomal exit tunnel, protecting the emerging polypeptides from interaction with other cytoplasmic proteins to ensure appropriate nascent protein targeting. The NAC complex also promotes mitochondrial protein import by enhancing productive ribosome interactions with the outer mitochondrial membrane and blocks the inappropriate interaction of ribosomes translating non-secretory nascent polypeptides with translocation sites in the membrane of the endoplasmic reticulum. EGD2 may also be involved in transcription regulation. The sequence is that of Nascent polypeptide-associated complex subunit alpha (EGD2) from Chaetomium globosum (strain ATCC 6205 / CBS 148.51 / DSM 1962 / NBRC 6347 / NRRL 1970) (Soil fungus).